A 273-amino-acid polypeptide reads, in one-letter code: UPF0173 metal-dependent hydrolase Bpro_4324 (273 aa).

The protein belongs to the UPF0173 family.

This Polaromonas sp. (strain JS666 / ATCC BAA-500) protein is UPF0173 metal-dependent hydrolase Bpro_4324.